The chain runs to 243 residues: tRNA (guanine-N(1)-)-methyltransferase (243 aa).

S-adenosyl-L-methionine is bound by residues Gly-108 and 127-132; that span reads LGDYVL.

It belongs to the RNA methyltransferase TrmD family. Homodimer.

Its subcellular location is the cytoplasm. The catalysed reaction is guanosine(37) in tRNA + S-adenosyl-L-methionine = N(1)-methylguanosine(37) in tRNA + S-adenosyl-L-homocysteine + H(+). Functionally, specifically methylates guanosine-37 in various tRNAs. The sequence is that of tRNA (guanine-N(1)-)-methyltransferase from Streptococcus gordonii (strain Challis / ATCC 35105 / BCRC 15272 / CH1 / DL1 / V288).